The chain runs to 597 residues: MERKYNVAVVGAGHAGCEASLACARMGLKTLIITLNADSMARMPCNPAVGGIAKGQMVREIDAMGGEIGRITDRAVLQFKMLNSSRGPAVWSPRAQCDKELYSVLMSKSVQNQQNLEILQSEATSLTVKNGKVCGVKILTGETIEADAVVITTGTFLKGTIHLGKMHFNGGRFNEVSALYLSKSLIEDCGLKLGRFKTTTTPRINSRSIDYSKMTEQFGDEKPVPFSYSTKVEEWRKNLKQLSCWLTYTNPITHKIVSDNLGLSSIYIGEVNSKSPRYCPSIEEKIERYPEKTSHHVFVEPEGYNTNEVYLNGLYTGLPFNLQQQMINSIVGLENAKVIRYGYAIEYDYSSPLQIKKTLETKTVKNLFLGGQINGTTGYEEAAAQGFVAGVNAGLKVLGKTPFILERNESYIGILVDDITTKGMDEPYRMFTSRAEYRLSIRNDNADLRLMDAGHSIGLISDKAYKKFELYRKAFTDICENNAENLPDDEDLSPWSIEKAKEEVYIHKKYEGYIEIQNKMINKMKKSKDRKIPEDFDYNKLKSLSAETKQRLFEVRPQTIGQASRICAIKPSDIAILTVYLEKQKKERKQKKHNKIK.

G11–G16 is an FAD binding site. S275–Y289 contributes to the NAD(+) binding site.

Belongs to the MnmG family. Homodimer. Heterotetramer of two MnmE and two MnmG subunits. FAD is required as a cofactor.

It localises to the cytoplasm. Its function is as follows. NAD-binding protein involved in the addition of a carboxymethylaminomethyl (cmnm) group at the wobble position (U34) of certain tRNAs, forming tRNA-cmnm(5)s(2)U34. The protein is tRNA uridine 5-carboxymethylaminomethyl modification enzyme MnmG of Endomicrobium trichonymphae.